Here is a 209-residue protein sequence, read N- to C-terminus: uncharacterized protein (209 aa).

Residues 41–76 (NVENLCLIRNKLKTDIENLLENKIDVENKLLVLRNQ) adopt a coiled-coil conformation.

This is an uncharacterized protein from Acanthamoeba polyphaga (Amoeba).